A 335-amino-acid polypeptide reads, in one-letter code: Glyceraldehyde-3-phosphate dehydrogenase (335 aa).

Residues 11-12 and Gly-110 contribute to the NAD(+) site; that span reads TI. D-glyceraldehyde 3-phosphate is bound at residue 139 to 141; the sequence is SCN. The active-site Nucleophile is Cys-140. An NAD(+)-binding site is contributed by Arg-168. 194 to 195 is a binding site for D-glyceraldehyde 3-phosphate; sequence HG. Gln-301 contacts NAD(+).

This sequence belongs to the glyceraldehyde-3-phosphate dehydrogenase family. As to quaternary structure, homotetramer.

The protein resides in the cytoplasm. It catalyses the reaction D-glyceraldehyde 3-phosphate + phosphate + NADP(+) = (2R)-3-phospho-glyceroyl phosphate + NADPH + H(+). The catalysed reaction is D-glyceraldehyde 3-phosphate + phosphate + NAD(+) = (2R)-3-phospho-glyceroyl phosphate + NADH + H(+). The protein operates within carbohydrate degradation; glycolysis; pyruvate from D-glyceraldehyde 3-phosphate: step 1/5. This is Glyceraldehyde-3-phosphate dehydrogenase from Halobacterium salinarum (strain ATCC 29341 / DSM 671 / R1).